The following is a 230-amino-acid chain: Cytidylate kinase (230 aa).

Residue 11–19 participates in ATP binding; it reads GPAAAGKST.

It belongs to the cytidylate kinase family. Type 1 subfamily.

It is found in the cytoplasm. The enzyme catalyses CMP + ATP = CDP + ADP. It catalyses the reaction dCMP + ATP = dCDP + ADP. The polypeptide is Cytidylate kinase (Oceanobacillus iheyensis (strain DSM 14371 / CIP 107618 / JCM 11309 / KCTC 3954 / HTE831)).